A 367-amino-acid chain; its full sequence is Flagellar P-ring protein (367 aa).

Positions 1–18 (MFRALITALFCFSGLALA) are cleaved as a signal peptide.

The protein belongs to the FlgI family. As to quaternary structure, the basal body constitutes a major portion of the flagellar organelle and consists of four rings (L,P,S, and M) mounted on a central rod.

It localises to the periplasm. It is found in the bacterial flagellum basal body. In terms of biological role, assembles around the rod to form the L-ring and probably protects the motor/basal body from shearing forces during rotation. The chain is Flagellar P-ring protein from Rhizorhabdus wittichii (strain DSM 6014 / CCUG 31198 / JCM 15750 / NBRC 105917 / EY 4224 / RW1) (Sphingomonas wittichii).